The sequence spans 223 residues: ATP-dependent dethiobiotin synthetase BioD (223 aa).

T16 is a Mg(2+) binding site. The active site involves K37. S41 lines the substrate pocket. Positions 50 and 111 each coordinate Mg(2+). Residues D50, 111 to 114 (EGAG), and 171 to 172 (NR) contribute to the ATP site.

Belongs to the dethiobiotin synthetase family. As to quaternary structure, homodimer. Mg(2+) serves as cofactor.

The protein resides in the cytoplasm. It carries out the reaction (7R,8S)-7,8-diammoniononanoate + CO2 + ATP = (4R,5S)-dethiobiotin + ADP + phosphate + 3 H(+). The protein operates within cofactor biosynthesis; biotin biosynthesis; biotin from 7,8-diaminononanoate: step 1/2. Functionally, catalyzes a mechanistically unusual reaction, the ATP-dependent insertion of CO2 between the N7 and N8 nitrogen atoms of 7,8-diaminopelargonic acid (DAPA, also called 7,8-diammoniononanoate) to form a ureido ring. The protein is ATP-dependent dethiobiotin synthetase BioD of Anaeromyxobacter sp. (strain K).